The following is a 727-amino-acid chain: NHL repeat-containing protein 2 (727 aa).

The Thioredoxin domain maps to 43-198 (RERDLTVPEL…TLKFYKERGQ (156 aa)). 6 NHL repeats span residues 207 to 249 (KLYK…TLKN), 260 to 302 (NSGR…IDLE), 330 to 364 (ISSP…VWAL), 404 to 434 (FAQP…VRMI), 456 to 500 (AFGD…VDPK), and 513 to 557 (ASNV…LDLE).

In terms of assembly, monomer.

The protein resides in the cytoplasm. It localises to the cytosol. In terms of biological role, required for normal embryonic development. The sequence is that of NHL repeat-containing protein 2 (NHLRC2) from Gallus gallus (Chicken).